Consider the following 264-residue polypeptide: Apolipoprotein A-I (264 aa).

An N-terminal signal peptide occupies residues 1–18 (MKAVLLVVAALFLAGSQA). 2 consecutive repeat copies span residues 67 to 88 (LRLSDNWDTLSTILTKLQADFG) and 89 to 110 (LATQEFWDTLEKETEWLKQIVS). A 10 X approximate tandem repeats region spans residues 67–264 (LRLSDNWDTL…DQASKQLAAQ (198 aa)). The 3; half-length repeat unit spans residues 111-121 (EDLQDVKHKVQ). Repeat copies occupy residues 122-143 (PYLENFQKKVQEEVERYREKVR), 144-165 (PLGIELRDGARQKLQELQEKLT), and 166-187 (PLGEDLRDRTREHVDVLRTQLA). A 7; truncated repeat occupies 188–207 (PFSEEMRQRLAKRLEELKDS). Position 193 is a methionine sulfoxide (Met-193). Repeat 8 spans residues 208 to 229 (ATLADYHAKASEHLKMLGEKAK). One copy of the 9; half-length repeat lies at 230 to 240 (PALEDLRQGLL). Repeat 10 spans residues 241–264 (PVLENLKASILSSIDQASKQLAAQ).

The protein belongs to the apolipoprotein A1/A4/E family. As to quaternary structure, homodimer. Interacts with APOA1BP and CLU. Component of a sperm activating protein complex (SPAP), consisting of APOA1, an immunoglobulin heavy chain, an immunoglobulin light chain and albumin. Interacts with NDRG1. Interacts with SCGB3A2. Interacts with NAXE and YJEFN3. Glycosylated. Post-translationally, palmitoylated. In terms of processing, phosphorylation sites are present in the extracellular medium.

It is found in the secreted. Participates in the reverse transport of cholesterol from tissues to the liver for excretion by promoting cholesterol efflux from tissues and by acting as a cofactor for the lecithin cholesterol acyltransferase (LCAT). As part of the SPAP complex, activates spermatozoa motility. The sequence is that of Apolipoprotein A-I (APOA1) from Cavia aperea (Brazilian guinea pig).